The following is a 236-amino-acid chain: Aspartate/glutamate leucyltransferase (236 aa).

Belongs to the R-transferase family. Bpt subfamily.

It localises to the cytoplasm. The enzyme catalyses N-terminal L-glutamyl-[protein] + L-leucyl-tRNA(Leu) = N-terminal L-leucyl-L-glutamyl-[protein] + tRNA(Leu) + H(+). The catalysed reaction is N-terminal L-aspartyl-[protein] + L-leucyl-tRNA(Leu) = N-terminal L-leucyl-L-aspartyl-[protein] + tRNA(Leu) + H(+). Functions in the N-end rule pathway of protein degradation where it conjugates Leu from its aminoacyl-tRNA to the N-termini of proteins containing an N-terminal aspartate or glutamate. The sequence is that of Aspartate/glutamate leucyltransferase from Halorhodospira halophila (strain DSM 244 / SL1) (Ectothiorhodospira halophila (strain DSM 244 / SL1)).